The primary structure comprises 136 residues: Large-conductance mechanosensitive channel (136 aa).

4 helical membrane passes run 9 to 29 (AFAS…GAAF), 32 to 52 (IVSS…LGGV), 54 to 74 (FSDL…VVIA), and 79 to 99 (IQTV…LKAI).

Belongs to the MscL family. Homopentamer.

It is found in the cell inner membrane. Channel that opens in response to stretch forces in the membrane lipid bilayer. May participate in the regulation of osmotic pressure changes within the cell. The chain is Large-conductance mechanosensitive channel from Shewanella oneidensis (strain ATCC 700550 / JCM 31522 / CIP 106686 / LMG 19005 / NCIMB 14063 / MR-1).